We begin with the raw amino-acid sequence, 1324 residues long: Mediator of RNA polymerase II transcription subunit 13 (1324 aa).

Disordered stretches follow at residues Glu296 to Ala346, Phe386 to Ala455, Gly535 to Ile590, His607 to Ser631, Lys694 to Ala816, and Thr1151 to Tyr1198. Positions Gly298–Gln331 are enriched in polar residues. Residues Asp398–Asn407 are compositionally biased toward acidic residues. Residues Asp408–Glu442 are compositionally biased toward basic and acidic residues. Residues Asp546–Ser566 are compositionally biased toward low complexity. 2 stretches are compositionally biased toward basic and acidic residues: residues Val567–Glu578 and His607–Ser617. 2 stretches are compositionally biased toward low complexity: residues Ser618–Ser631 and Ser724–Ala743. Residues Leu750 to Ala784 are compositionally biased toward polar residues. Composition is skewed to low complexity over residues Ser785–Ala816 and Thr1172–Pro1184.

The protein belongs to the Mediator complex subunit 13 family. In terms of assembly, component of the SRB8-11 complex, which itself associates with the Mediator complex.

It localises to the nucleus. In terms of biological role, component of the SRB8-11 complex. The SRB8-11 complex is a regulatory module of the Mediator complex which is itself involved in regulation of basal and activated RNA polymerase II-dependent transcription. The SRB8-11 complex may be involved in the transcriptional repression of a subset of genes regulated by Mediator. It may inhibit the association of the Mediator complex with RNA polymerase II to form the holoenzyme complex. In Yarrowia lipolytica (strain CLIB 122 / E 150) (Yeast), this protein is Mediator of RNA polymerase II transcription subunit 13 (SSN2).